The following is a 131-amino-acid chain: Small ribosomal subunit protein uS8 (131 aa).

It belongs to the universal ribosomal protein uS8 family. In terms of assembly, part of the 30S ribosomal subunit. Contacts proteins S5 and S12.

One of the primary rRNA binding proteins, it binds directly to 16S rRNA central domain where it helps coordinate assembly of the platform of the 30S subunit. This chain is Small ribosomal subunit protein uS8, found in Bordetella parapertussis (strain 12822 / ATCC BAA-587 / NCTC 13253).